The chain runs to 110 residues: N(4)-acetylcytidine amidohydrolase (110 aa).

The 88-residue stretch at 6-93 (TFFERFEQDI…IQEIYPGLEQ (88 aa)) folds into the ASCH domain. K20 functions as the Proton acceptor in the catalytic mechanism. T23 (nucleophile) is an active-site residue. E73 functions as the Proton donor in the catalytic mechanism.

This sequence belongs to the N(4)-acetylcytidine amidohydrolase family.

The enzyme catalyses N(4)-acetylcytidine + H2O = cytidine + acetate + H(+). The catalysed reaction is N(4)-acetyl-2'-deoxycytidine + H2O = 2'-deoxycytidine + acetate + H(+). It carries out the reaction N(4)-acetylcytosine + H2O = cytosine + acetate + H(+). Its function is as follows. Catalyzes the hydrolysis of N(4)-acetylcytidine (ac4C). This Shewanella sp. (strain ANA-3) protein is N(4)-acetylcytidine amidohydrolase.